A 259-amino-acid polypeptide reads, in one-letter code: Dihydroorotate dehydrogenase B (NAD(+)), electron transfer subunit (259 aa).

In terms of domain architecture, FAD-binding FR-type spans 3–103 (KKQGRLTIVK…LGPLGQGFPL (101 aa)). FAD is bound by residues 54–57 (RPIS), 71–73 (IYR), and 78–79 (GT). Residues cysteine 222, cysteine 227, cysteine 230, and cysteine 246 each coordinate [2Fe-2S] cluster.

This sequence belongs to the PyrK family. As to quaternary structure, heterotetramer of 2 PyrK and 2 PyrD type B subunits. [2Fe-2S] cluster is required as a cofactor. It depends on FAD as a cofactor.

The protein operates within pyrimidine metabolism; UMP biosynthesis via de novo pathway; orotate from (S)-dihydroorotate (NAD(+) route): step 1/1. Responsible for channeling the electrons from the oxidation of dihydroorotate from the FMN redox center in the PyrD type B subunit to the ultimate electron acceptor NAD(+). The protein is Dihydroorotate dehydrogenase B (NAD(+)), electron transfer subunit of Shouchella clausii (strain KSM-K16) (Alkalihalobacillus clausii).